We begin with the raw amino-acid sequence, 335 residues long: MKVSEFDYELPPELIAQEPVEPRDASRLMVLHRKTQRIEHRIFREIIEYLEPGDLLVLNVSKVIPARLYARKKTGASIEILLIERLEEGIWKCLVRPGQKVKKGTELVIDEDLSAVCLGRGEDGTRILKFQPQDDRLIFEKGRTPLPPYIKNEVPLERYQTVYAKEEGSVAAPTAGLHFTPELIEKLKKKGVQFAEVVLHVGIGTFRPVKVEEVEKHKMHEEFYQVPKETVRKLRETRERGNRIVAVGTTTVRTLETIARLPEQEEYVGKTDLFIYPPFEFKLVDALVTNFHLPRSTLLMLVAAFAGKDFVMEAYREAVKRRYRFFSFGDAMLIL.

It belongs to the QueA family. In terms of assembly, monomer.

Its subcellular location is the cytoplasm. It carries out the reaction 7-aminomethyl-7-carbaguanosine(34) in tRNA + S-adenosyl-L-methionine = epoxyqueuosine(34) in tRNA + adenine + L-methionine + 2 H(+). It functions in the pathway tRNA modification; tRNA-queuosine biosynthesis. In terms of biological role, transfers and isomerizes the ribose moiety from AdoMet to the 7-aminomethyl group of 7-deazaguanine (preQ1-tRNA) to give epoxyqueuosine (oQ-tRNA). The protein is S-adenosylmethionine:tRNA ribosyltransferase-isomerase (queA) of Thermotoga maritima (strain ATCC 43589 / DSM 3109 / JCM 10099 / NBRC 100826 / MSB8).